The sequence spans 247 residues: 5'-nucleotidase SurE (247 aa).

A divalent metal cation-binding residues include aspartate 8, aspartate 9, serine 39, and asparagine 91.

It belongs to the SurE nucleotidase family. A divalent metal cation serves as cofactor.

The protein localises to the cytoplasm. It catalyses the reaction a ribonucleoside 5'-phosphate + H2O = a ribonucleoside + phosphate. Functionally, nucleotidase that shows phosphatase activity on nucleoside 5'-monophosphates. This is 5'-nucleotidase SurE from Aromatoleum aromaticum (strain DSM 19018 / LMG 30748 / EbN1) (Azoarcus sp. (strain EbN1)).